The sequence spans 376 residues: Homocitrate synthase (376 aa).

Residues 4 to 259 enclose the Pyruvate carboxyltransferase domain; that stretch reads WKIIDSTLRE…RRKYKLEMLP (256 aa). Arg-12 serves as a coordination point for 2-oxoglutarate. A Mg(2+)-binding site is contributed by Glu-13. Residue His-72 participates in 2-oxoglutarate binding. Asp-92 lines the L-lysine pocket. Arg-133 contributes to the 2-oxoglutarate binding site. Residues Ser-135 and Thr-166 each contribute to the L-lysine site. Thr-166 is a 2-oxoglutarate binding site. Positions 195 and 197 each coordinate Mg(2+). His-292 serves as the catalytic Proton acceptor.

This sequence belongs to the alpha-IPM synthase/homocitrate synthase family. Homocitrate synthase LYS20/LYS21 subfamily. As to quaternary structure, exists in an equilibrium between monomer and homodimer. Mg(2+) serves as cofactor. Requires Mn(2+) as cofactor.

The protein resides in the cytoplasm. The catalysed reaction is acetyl-CoA + 2-oxoglutarate + H2O = (2R)-homocitrate + CoA + H(+). It carries out the reaction oxaloacetate + acetyl-CoA + H2O = citrate + CoA + H(+). Its pathway is amino-acid biosynthesis; L-lysine biosynthesis via AAA pathway; L-alpha-aminoadipate from 2-oxoglutarate: step 1/5. With respect to regulation, is highly and competitively inhibited by lysine that binds to the active site and competes with 2-oxoglutarate. Is also slightly inhibited by arginine and 2-aminoethylcysteine. In terms of biological role, catalyzes the aldol-type condensation of 2-oxoglutarate with acetyl-CoA to yield homocitrate. Carries out the first step of the alpha-aminoadipate (AAA) lysine biosynthesis pathway. To a lesser extent, can also use oxaloacetate in place of 2-oxoglutarate, leading to citrate. Does not display 2-isopropylmalate synthase activity since it cannot use 2-oxoisovalerate. The sequence is that of Homocitrate synthase from Thermus thermophilus (strain ATCC BAA-163 / DSM 7039 / HB27).